A 514-amino-acid polypeptide reads, in one-letter code: MIQKRKRTVSFRLVLMCTLLFVSLPITKTSAVNGTLMQYFEWYTPNDGQHWKRLQNDAEHLSDIGITAVWIPPAYKGLSQSDNGYGPYDLYDLGEFQQKGTVRTKYGTKSELQDAIGSLHSRNVQVYGDVVLNHKAGADATEDVTAVEVNPANRNQETSEEYQIKAWTDFRFPGRGNTYSDFKWHWYHFDGADWDESRKISRIFKFRGEGKAWDWEVSSENGNYDYLMYADVDYDHPDVVAETKKWGIWYANELSLDGFRIDAAKHIKFSFLRDWVQAVRQATGKEMFTVAEYWQNNAGKLENYLNKTSFNQSVFDVPLHFNLQAASSQGGGYDMRRLLDGTVVSRHPEKAVTFVENHDTQPGQSLESTVQTWFKPLAYAFILTRESGYPQVFYGDMYGTKGTSPKEIPSLKDNIEPILKARKEYAYGPQHDYIDHPDVIGWTREGDSSAAKSGLAALITDGPGGSKRMYAGLKNAGETWYDITGNRSDTVKIGSDGWGEFHVNDGSVSIYVQK.

A signal peptide spans 1-31 (MIQKRKRTVSFRLVLMCTLLFVSLPITKTSA). Ca(2+) is bound by residues Asn133, Asp190, Ala212, Asp214, Asp225, Asp231, Asp233, and Asp235. Position 190 (Asp190) interacts with Na(+). Residues Asp214, Asp225, and Asp231 each contribute to the Na(+) site. Asp262 acts as the Nucleophile in catalysis. Position 266 (His266) interacts with Ca(2+). The active-site Proton donor is the Glu292. 3 residues coordinate Ca(2+): Gly331, Asp438, and Asp461.

This sequence belongs to the glycosyl hydrolase 13 family. In terms of assembly, monomer. Ca(2+) serves as cofactor. Na(+) is required as a cofactor.

It is found in the secreted. The catalysed reaction is Endohydrolysis of (1-&gt;4)-alpha-D-glucosidic linkages in polysaccharides containing three or more (1-&gt;4)-alpha-linked D-glucose units.. This is Alpha-amylase from Bacillus amyloliquefaciens (Bacillus velezensis).